A 347-amino-acid chain; its full sequence is Probable dual-specificity RNA methyltransferase RlmN (347 aa).

The active-site Proton acceptor is E93. Residues 100–323 (KAKRKTACVS…KKAGLNISTR (224 aa)) enclose the Radical SAM core domain. A disulfide bridge connects residues C107 and C334. [4Fe-4S] cluster contacts are provided by C114, C118, and C121. S-adenosyl-L-methionine contacts are provided by residues 160 to 161 (GE), S192, 215 to 217 (SLT), and N291. The S-methylcysteine intermediate role is filled by C334.

This sequence belongs to the radical SAM superfamily. RlmN family. The cofactor is [4Fe-4S] cluster.

The protein resides in the cytoplasm. It carries out the reaction adenosine(2503) in 23S rRNA + 2 reduced [2Fe-2S]-[ferredoxin] + 2 S-adenosyl-L-methionine = 2-methyladenosine(2503) in 23S rRNA + 5'-deoxyadenosine + L-methionine + 2 oxidized [2Fe-2S]-[ferredoxin] + S-adenosyl-L-homocysteine. It catalyses the reaction adenosine(37) in tRNA + 2 reduced [2Fe-2S]-[ferredoxin] + 2 S-adenosyl-L-methionine = 2-methyladenosine(37) in tRNA + 5'-deoxyadenosine + L-methionine + 2 oxidized [2Fe-2S]-[ferredoxin] + S-adenosyl-L-homocysteine. In terms of biological role, specifically methylates position 2 of adenine 2503 in 23S rRNA and position 2 of adenine 37 in tRNAs. The protein is Probable dual-specificity RNA methyltransferase RlmN of Treponema denticola (strain ATCC 35405 / DSM 14222 / CIP 103919 / JCM 8153 / KCTC 15104).